Reading from the N-terminus, the 444-residue chain is Probable glycine dehydrogenase (decarboxylating) subunit 1 (444 aa).

This sequence belongs to the GcvP family. N-terminal subunit subfamily. The glycine cleavage system is composed of four proteins: P, T, L and H. In this organism, the P 'protein' is a heterodimer of two subunits.

It carries out the reaction N(6)-[(R)-lipoyl]-L-lysyl-[glycine-cleavage complex H protein] + glycine + H(+) = N(6)-[(R)-S(8)-aminomethyldihydrolipoyl]-L-lysyl-[glycine-cleavage complex H protein] + CO2. Functionally, the glycine cleavage system catalyzes the degradation of glycine. The P protein binds the alpha-amino group of glycine through its pyridoxal phosphate cofactor; CO(2) is released and the remaining methylamine moiety is then transferred to the lipoamide cofactor of the H protein. The protein is Probable glycine dehydrogenase (decarboxylating) subunit 1 of Chlorobium phaeobacteroides (strain DSM 266 / SMG 266 / 2430).